Consider the following 1964-residue polypeptide: Neurogenic locus notch homolog protein 4 (1964 aa).

The N-terminal stretch at 1–20 (MQPQLLLLLLLPLNFPVILT) is a signal peptide. 4 consecutive EGF-like domains span residues 21–60 (RELL…ETCQ), 61–112 (FPDP…DRCQ), 115–152 (LEEL…EQCQ), and 153–189 (LRDF…HTCE). Over 21–1443 (RELLCGGSPE…TRPSANQLPW (1423 aa)) the chain is Extracellular. 95 cysteine pairs are disulfide-bonded: cysteine 25–cysteine 38, cysteine 32–cysteine 48, cysteine 50–cysteine 59, cysteine 65–cysteine 77, cysteine 71–cysteine 100, cysteine 102–cysteine 111, cysteine 119–cysteine 130, cysteine 124–cysteine 140, cysteine 142–cysteine 151, cysteine 157–cysteine 168, cysteine 162–cysteine 177, cysteine 179–cysteine 188, cysteine 195–cysteine 208, cysteine 202–cysteine 217, cysteine 219–cysteine 228, cysteine 235–cysteine 246, cysteine 240–cysteine 259, cysteine 261–cysteine 270, cysteine 277–cysteine 288, cysteine 282–cysteine 297, cysteine 299–cysteine 308, cysteine 315–cysteine 329, cysteine 323–cysteine 338, cysteine 340–cysteine 349, cysteine 356–cysteine 367, cysteine 361–cysteine 376, cysteine 378–cysteine 387, cysteine 393–cysteine 404, cysteine 398–cysteine 415, cysteine 417–cysteine 426, cysteine 433–cysteine 449, cysteine 443–cysteine 458, cysteine 460–cysteine 469, cysteine 476–cysteine 487, cysteine 481–cysteine 496, cysteine 498–cysteine 507, cysteine 514–cysteine 525, cysteine 519–cysteine 534, cysteine 536–cysteine 545, cysteine 552–cysteine 563, cysteine 557–cysteine 572, cysteine 574–cysteine 583, cysteine 590–cysteine 601, cysteine 595–cysteine 610, cysteine 612–cysteine 621, cysteine 626–cysteine 637, cysteine 631–cysteine 646, cysteine 648–cysteine 655, cysteine 662–cysteine 669, cysteine 664–cysteine 674, cysteine 676–cysteine 685, cysteine 692–cysteine 703, cysteine 697–cysteine 712, cysteine 714–cysteine 723, cysteine 730–cysteine 741, cysteine 735–cysteine 750, cysteine 752–cysteine 761, cysteine 768–cysteine 779, cysteine 773–cysteine 788, cysteine 790–cysteine 799, cysteine 807–cysteine 818, cysteine 812–cysteine 827, cysteine 829–cysteine 838, cysteine 845–cysteine 856, cysteine 850–cysteine 865, cysteine 867–cysteine 876, cysteine 882–cysteine 903, cysteine 897–cysteine 912, cysteine 914–cysteine 923, cysteine 930–cysteine 941, cysteine 935–cysteine 950, cysteine 952–cysteine 961, cysteine 968–cysteine 979, cysteine 973–cysteine 988, cysteine 990–cysteine 999, cysteine 1006–cysteine 1019, cysteine 1011–cysteine 1028, cysteine 1030–cysteine 1039, cysteine 1046–cysteine 1057, cysteine 1051–cysteine 1069, cysteine 1071–cysteine 1080, cysteine 1087–cysteine 1098, cysteine 1092–cysteine 1110, cysteine 1112–cysteine 1121, cysteine 1130–cysteine 1142, cysteine 1136–cysteine 1155, cysteine 1157–cysteine 1166, cysteine 1174–cysteine 1187, cysteine 1183–cysteine 1199, cysteine 1210–cysteine 1234, cysteine 1216–cysteine 1229, cysteine 1225–cysteine 1241, cysteine 1247–cysteine 1273, cysteine 1255–cysteine 1268, and cysteine 1264–cysteine 1280. One can recognise an EGF-like 5; calcium-binding domain in the interval 191–229 (DINECFLEPGPCPQGTSCHNTLGSYQCLCPVGQEGPQCK). The EGF-like 6 domain maps to 231-271 (RKGACPPGSCLNGGTCQLVPEGHSTFHLCLCPPGFTGLDCE). One can recognise an EGF-like 7; calcium-binding domain in the interval 273-309 (NPDDCVRHQCQNGATCLDGLDTYTCLCPKTWKGWDCS). The region spanning 311-350 (DIDECEARGPPRCRNGGTCQNTAGSFHCVCVSGWGGAGCE) is the EGF-like 8; calcium-binding domain. In terms of domain architecture, EGF-like 9; calcium-binding spans 352 to 388 (NLDDCAAATCAPGSTCIDRVGSFSCLCPPGRTGLLCH). The EGF-like 10 domain maps to 389–427 (LEDMCLSQPCHVNAQCSTNPLTGSTLCICQPGYSGSTCH). An EGF-like 11; calcium-binding domain is found at 429–470 (DLDECQMAQQGPSPCEHGGSCINTPGSFNCLCLPGYTGSRCE). The 37-residue stretch at 472-508 (DHNECLSQPCHPGSTCLDLLATFHCLCPPGLEGRLCE) folds into the EGF-like 12; calcium-binding domain. The EGF-like 13; calcium-binding domain occupies 510-546 (EVNECTSNPCLNQAACHDLLNGFQCLCLPGFTGARCE). An EGF-like 14; calcium-binding domain is found at 548-584 (DMDECSSTPCANGGRCRDQPGAFYCECLPGFEGPHCE). In terms of domain architecture, EGF-like 15; calcium-binding spans 586–622 (EVDECLSDPCPVGASCLDLPGAFFCLCRPGFTGQLCE). EGF-like domains are found at residues 623 to 656 (VPLC…PGCV), 658 to 686 (AEDN…PECE), 688 to 724 (ELGG…LTCS), 726 to 762 (EVTA…RHCQ), 764 to 800 (AVDH…LHCE), 803 to 839 (TNPS…SSCQ), 841 to 877 (LIDL…ALCD), 878 to 924 (FPLS…KLCQ), 926 to 962 (NVNP…QNCS), 964 to 1000 (VLDA…LRCE), 1002 to 1040 (DVDE…QRCE), 1042 to 1081 (EMDL…PTCS), 1083 to 1122 (KALS…PDCL), and 1126 to 1167 (APPG…PRCQ). N-linked (GlcNAc...) asparagine glycosylation occurs at asparagine 711. Asparagine 960 carries an N-linked (GlcNAc...) asparagine glycan. Residue asparagine 1139 is glycosylated (N-linked (GlcNAc...) asparagine). LNR repeat units follow at residues 1166–1209 (CQRP…PWKG), 1210–1241 (CPPH…GYDC), and 1247–1287 (CIPA…GEDS). The interval 1345–1369 (EELSGARDSSSWERQAPPTQPLGKE) is disordered. The chain crosses the membrane as a helical span at residues 1444-1464 (PILCSPVVGVLLLALGALLVL). Residues 1465–1964 (QLIRRRRREH…PLNSVVRNLN (500 aa)) lie on the Cytoplasmic side of the membrane. The tract at residues 1516-1535 (VDEDGVAMCSGPEEGEAEET) is disordered. ANK repeat units follow at residues 1628–1657 (TGET…NPNQ), 1661–1691 (AGRT…TVDA), 1695–1724 (DGTT…DVGA), 1728–1757 (RGKT…DKDA), and 1761–1790 (REQT…ARGL). The tract at residues 1879–1907 (RSGSCGGPTTRGRRFSAGSRGRRGARASQ) is disordered.

This sequence belongs to the NOTCH family. In terms of assembly, heterodimer of a C-terminal fragment N(TM) and a N-terminal fragment N(EC) which are probably linked by disulfide bonds. Interacts with MAML1, MAML2 and MAML3 which act as transcriptional coactivators for NOTCH4. Post-translationally, synthesized in the endoplasmic reticulum as an inactive form which is proteolytically cleaved by a furin-like convertase in the trans-Golgi network before it reaches the plasma membrane to yield an active, ligand-accessible form. Cleavage results in a C-terminal fragment N(TM) and a N-terminal fragment N(EC). Following ligand binding, it is cleaved by TNF-alpha converting enzyme (TACE) to yield a membrane-associated intermediate fragment called notch extracellular truncation (NEXT). This fragment is then cleaved by presenilin dependent gamma-secretase to release a notch-derived peptide containing the intracellular domain (NICD) from the membrane. Phosphorylated. As to expression, highly expressed in lung, moderately in heart kidney, and at lower levels in the ovary and skeletal muscle. A very low expression is seen in the brain, intestine, liver and testis.

Its subcellular location is the cell membrane. It is found in the nucleus. Functionally, functions as a receptor for membrane-bound ligands Jagged1, Jagged2 and Delta1 to regulate cell-fate determination. Upon ligand activation through the released notch intracellular domain (NICD) it forms a transcriptional activator complex with RBPJ/RBPSUH and activates genes of the enhancer of split locus. Affects the implementation of differentiation, proliferation and apoptotic programs. May regulate branching morphogenesis in the developing vascular system. In Mus musculus (Mouse), this protein is Neurogenic locus notch homolog protein 4.